The following is a 492-amino-acid chain: Gamma-aminobutyric acid receptor subunit alpha-3 (492 aa).

The signal sequence occupies residues 1–28 (MIITQTSHCYMTSLGILFLINILPGTTG). The interval 28 to 54 (GQGESRRQEPGDFVKQDIGGLSPKHAP) is disordered. Residues 29–274 (QGESRRQEPG…MTTHFHLKRK (246 aa)) lie on the Extracellular side of the membrane. A compositionally biased stretch (basic and acidic residues) spans 31 to 42 (ESRRQEPGDFVK). N-linked (GlcNAc...) asparagine glycosylation is present at Asn63. 4-aminobutanoate is bound at residue Arg119. N-linked (GlcNAc...) asparagine glycans are attached at residues Asn163 and Asn176. Thr182 contributes to the 4-aminobutanoate binding site. A disulfide bond links Cys191 and Cys205. N-linked (GlcNAc...) asparagine glycosylation occurs at Asn228. A helical membrane pass occupies residues 275–295 (IGYFVIQTYLPCIMTVILSQV). The Cytoplasmic portion of the chain corresponds to 296 to 305 (SFWLNRESVP). Residues 306 to 325 (ARTVFGVTTVLTMTTLSISA) traverse the membrane as a helical segment. Topologically, residues 326 to 336 (RNSLPKVAYAT) are extracellular. A helical transmembrane segment spans residues 337-357 (AMDWFIAVCYAFVFSALIEFA). At 358 to 457 (TVNYFTKRSW…TYNSVSKVDK (100 aa)) the chain is on the cytoplasmic side. The residue at position 426 (Ser426) is a Phosphoserine. At Thr427 the chain carries Phosphothreonine. A phosphoserine mark is found at Ser433 and Ser442. Residues 458–478 (ISRIIFPVLFAIFNLVYWATY) form a helical membrane-spanning segment. Topologically, residues 479–492 (VNRESAIKGMIRKQ) are extracellular.

The protein belongs to the ligand-gated ion channel (TC 1.A.9) family. Gamma-aminobutyric acid receptor (TC 1.A.9.5) subfamily. GABRA3 sub-subfamily. In terms of assembly, heteropentamer, formed by a combination of alpha (GABRA1-6), beta (GABRB1-3), gamma (GABRG1-3), delta (GABRD), epsilon (GABRE), rho (GABRR1-3), pi (GABRP) and theta (GABRQ) chains, each subunit exhibiting distinct physiological and pharmacological properties. Binds UBQLN1. Interacts with GPHN.

Its subcellular location is the postsynaptic cell membrane. The protein resides in the cell membrane. It catalyses the reaction chloride(in) = chloride(out). Potentiated by etomidate, propofol, pregnanolone and flurazepam. Its function is as follows. Alpha subunit of the heteropentameric ligand-gated chloride channel gated by gamma-aminobutyric acid (GABA), a major inhibitory neurotransmitter in the brain. GABA-gated chloride channels, also named GABA(A) receptors (GABAAR), consist of five subunits arranged around a central pore and contain GABA active binding site(s) located at the alpha and beta subunit interface(s). When activated by GABA, GABAARs selectively allow the flow of chloride anions across the cell membrane down their electrochemical gradient. Chloride influx into the postsynaptic neuron following GABAAR opening decreases the neuron ability to generate a new action potential, thereby reducing nerve transmission. The chain is Gamma-aminobutyric acid receptor subunit alpha-3 from Homo sapiens (Human).